Here is a 466-residue protein sequence, read N- to C-terminus: Communesin N16 acyltransferase cnsK (466 aa).

Belongs to the fumigaclavine B O-acetyltransferase family.

The protein operates within alkaloid biosynthesis. Its function is as follows. Communesin N16 acyltransferase; part of the gene cluster that mediates the biosynthesis of communesins, a prominent class of indole alkaloids with great potential as pharmaceuticals. Communesins are biosynthesized by the coupling of tryptamine and aurantioclavine, two building blocks derived from L-tryptophan. The L-tryptophan decarboxylase cnsB converts L-tryptophan to tryptamine, whereas the tryptophan dimethylallyltransferase cnsF converts L-tryptophan to 4-dimethylallyl tryptophan which is further transformed to aurantioclavine by the aurantioclavine synthase cnsA, probably aided by the catalase cnsD. The cytochrome P450 monooxygenase cnsC catalyzes the heterodimeric coupling between the two different indole moieties, tryptamine and aurantioclavine, to construct vicinal quaternary stereocenters and yield the heptacyclic communesin scaffold. The O-methyltransferase cnsE then methylates the communesin scaffold to produce communesin K, the simplest characterized communesin that contains the heptacyclic core. The dioxygenase cnsJ converts communesin K into communesin I. Acylation to introduce the hexadienyl group at position N16 of communesin I by the acyltransferase cnsK leads to the production of communesin B. The hexadienyl group is produced by the highly reducing polyketide synthase cnsI, before being hydrolytically removed from cnsI by the serine hydrolase cnsH, converted into hexadienyl-CoA by the CoA ligase cnsG, and then transferred to communesin I by cnsK. Surprisingly, cnsK may also be a promiscuous acyltransferase that can tolerate a range of acyl groups, including acetyl-, propionyl-, and butyryl-CoA, which lead to communesins A, G and H respectively. The roles of the alpha-ketoglutarate-dependent dioxygenases cnsM and cnsP have still to be determined. This chain is Communesin N16 acyltransferase cnsK, found in Penicillium expansum (Blue mold rot fungus).